Reading from the N-terminus, the 336-residue chain is Dihydroorotate dehydrogenase (quinone) (336 aa).

FMN is bound by residues 62-66 (AGLDK) and T86. K66 lines the substrate pocket. A substrate-binding site is contributed by 111–115 (NRMGF). Positions 139 and 172 each coordinate FMN. N172 is a binding site for substrate. Residue S175 is the Nucleophile of the active site. Position 177 (N177) interacts with substrate. Residues K217 and T245 each contribute to the FMN site. Residue 246–247 (NT) participates in substrate binding. Residues G268, G297, and 318 to 319 (YT) each bind FMN.

The protein belongs to the dihydroorotate dehydrogenase family. Type 2 subfamily. As to quaternary structure, monomer. Requires FMN as cofactor.

The protein resides in the cell membrane. The enzyme catalyses (S)-dihydroorotate + a quinone = orotate + a quinol. It participates in pyrimidine metabolism; UMP biosynthesis via de novo pathway; orotate from (S)-dihydroorotate (quinone route): step 1/1. Its function is as follows. Catalyzes the conversion of dihydroorotate to orotate with quinone as electron acceptor. The polypeptide is Dihydroorotate dehydrogenase (quinone) (Vibrio parahaemolyticus serotype O3:K6 (strain RIMD 2210633)).